The chain runs to 200 residues: NADH-quinone oxidoreductase subunit C (200 aa).

The protein belongs to the complex I 30 kDa subunit family. NDH-1 is composed of 14 different subunits. Subunits NuoB, C, D, E, F, and G constitute the peripheral sector of the complex.

It localises to the cell inner membrane. The catalysed reaction is a quinone + NADH + 5 H(+)(in) = a quinol + NAD(+) + 4 H(+)(out). Its function is as follows. NDH-1 shuttles electrons from NADH, via FMN and iron-sulfur (Fe-S) centers, to quinones in the respiratory chain. The immediate electron acceptor for the enzyme in this species is believed to be ubiquinone. Couples the redox reaction to proton translocation (for every two electrons transferred, four hydrogen ions are translocated across the cytoplasmic membrane), and thus conserves the redox energy in a proton gradient. The protein is NADH-quinone oxidoreductase subunit C of Burkholderia multivorans (strain ATCC 17616 / 249).